The primary structure comprises 472 residues: WD repeat-containing protein 88 (472 aa).

The disordered stretch occupies residues Met-1–Ser-22. WD repeat units lie at residues Gly-100 to Asp-139, Arg-143 to Lys-182, Arg-184 to Val-224, His-228 to Thr-267, Ala-271 to Cys-310, Gly-319 to Ser-358, and Gly-361 to Leu-400. The disordered stretch occupies residues Leu-447–Asp-472. Residues Ser-458–Asp-472 show a composition bias toward basic and acidic residues.

The sequence is that of WD repeat-containing protein 88 (WDR88) from Homo sapiens (Human).